We begin with the raw amino-acid sequence, 107 residues long: Flagellar transcriptional regulator FlhD (107 aa).

Belongs to the FlhD family. As to quaternary structure, homodimer; disulfide-linked. Forms a heterohexamer composed of two FlhC and four FlhD subunits. Each FlhC binds a FlhD dimer, forming a heterotrimer, and a hexamer assembles by dimerization of two heterotrimers.

The protein localises to the cytoplasm. Its function is as follows. Functions in complex with FlhC as a master transcriptional regulator that regulates transcription of several flagellar and non-flagellar operons by binding to their promoter region. Activates expression of class 2 flagellar genes, including fliA, which is a flagellum-specific sigma factor that turns on the class 3 genes. Also regulates genes whose products function in a variety of physiological pathways. In Bordetella pertussis (strain Tohama I / ATCC BAA-589 / NCTC 13251), this protein is Flagellar transcriptional regulator FlhD.